Consider the following 180-residue polypeptide: uncharacterized protein (180 aa).

Residues 17–80 enclose the HTH dtxR-type domain; sequence RRSRILHYLM…LIPNMGVRLT (64 aa).

Belongs to the DtxR/MntR family.

This is an uncharacterized protein from Aeropyrum pernix (strain ATCC 700893 / DSM 11879 / JCM 9820 / NBRC 100138 / K1).